The following is a 729-amino-acid chain: Fatty acid oxidation complex subunit alpha (729 aa).

The segment at 1–189 (MLYKGDTLYL…KIGLVDGVVK (189 aa)) is enoyl-CoA hydratase/isomerase. Residue D296 coordinates substrate. The 3-hydroxyacyl-CoA dehydrogenase stretch occupies residues 311–729 (ETPKHAAVLG…ARPVGELKTA (419 aa)). Residues M324, D343, 400–402 (VVE), K407, and S429 contribute to the NAD(+) site. Residue H450 is the For 3-hydroxyacyl-CoA dehydrogenase activity of the active site. N453 contributes to the NAD(+) binding site. Residues N500 and Y660 each coordinate substrate.

It in the N-terminal section; belongs to the enoyl-CoA hydratase/isomerase family. The protein in the C-terminal section; belongs to the 3-hydroxyacyl-CoA dehydrogenase family. Heterotetramer of two alpha chains (FadB) and two beta chains (FadA).

The catalysed reaction is a (3S)-3-hydroxyacyl-CoA + NAD(+) = a 3-oxoacyl-CoA + NADH + H(+). It carries out the reaction a (3S)-3-hydroxyacyl-CoA = a (2E)-enoyl-CoA + H2O. It catalyses the reaction a 4-saturated-(3S)-3-hydroxyacyl-CoA = a (3E)-enoyl-CoA + H2O. The enzyme catalyses (3S)-3-hydroxybutanoyl-CoA = (3R)-3-hydroxybutanoyl-CoA. The catalysed reaction is a (3Z)-enoyl-CoA = a 4-saturated (2E)-enoyl-CoA. It carries out the reaction a (3E)-enoyl-CoA = a 4-saturated (2E)-enoyl-CoA. Its pathway is lipid metabolism; fatty acid beta-oxidation. Functionally, involved in the aerobic and anaerobic degradation of long-chain fatty acids via beta-oxidation cycle. Catalyzes the formation of 3-oxoacyl-CoA from enoyl-CoA via L-3-hydroxyacyl-CoA. It can also use D-3-hydroxyacyl-CoA and cis-3-enoyl-CoA as substrate. The chain is Fatty acid oxidation complex subunit alpha from Enterobacter cloacae.